A 445-amino-acid chain; its full sequence is DNA primase DnaG (445 aa).

Residues 166 to 252 (DAIVVVEGRS…SVEDLSRSEV (87 aa)) form the Toprim domain. Mg(2+) is bound by residues Glu172, Asp214, and Asp216. Residues 276 to 355 (EEMSQAGEST…NGDGPTIPSL (80 aa)) are disordered. Residues 284–298 (STTADGGAVAAATSD) show a composition bias toward low complexity. A compositionally biased stretch (polar residues) spans 303–313 (NQPSPSSQTGS). Positions 324–337 (SVVDNSNATAVADA) are enriched in low complexity.

This sequence belongs to the archaeal DnaG primase family. Forms a ternary complex with MCM helicase and DNA. The cofactor is Mg(2+).

It carries out the reaction ssDNA + n NTP = ssDNA/pppN(pN)n-1 hybrid + (n-1) diphosphate.. In terms of biological role, RNA polymerase that catalyzes the synthesis of short RNA molecules used as primers for DNA polymerase during DNA replication. The chain is DNA primase DnaG from Haloarcula marismortui (strain ATCC 43049 / DSM 3752 / JCM 8966 / VKM B-1809) (Halobacterium marismortui).